The following is a 217-amino-acid chain: MRLRHKPYAMDRINEYSHIVIGNPEERAGSWKEVFGNEQPIHIEVGTGRGRFMYDMAKANPHINYIGIEKFTSVVVDALDKLIEEELPNLKLINKDAEDLTVFFAKGEIDRVYLNFSDPWPKKRHTKRRLTYKTFLRNYEEVLVEGGEIHFKTDNQGLFEYSLMSMAEYGMLLTYLSLDLHNSDFEGNIMTEYEEKFSSKGHRIYRVEAKYRTEPMQ.

Positions 44, 69, 96, and 118 each coordinate S-adenosyl-L-methionine. Asp118 is an active-site residue. Residues Lys122, Asp154, and 191–194 (TEYE) each bind substrate.

It belongs to the class I-like SAM-binding methyltransferase superfamily. TrmB family.

The enzyme catalyses guanosine(46) in tRNA + S-adenosyl-L-methionine = N(7)-methylguanosine(46) in tRNA + S-adenosyl-L-homocysteine. It participates in tRNA modification; N(7)-methylguanine-tRNA biosynthesis. Its function is as follows. Catalyzes the formation of N(7)-methylguanine at position 46 (m7G46) in tRNA. The polypeptide is tRNA (guanine-N(7)-)-methyltransferase (Bacillus cereus (strain B4264)).